Here is a 732-residue protein sequence, read N- to C-terminus: Segment polarity protein dishevelled homolog DVL-2 (732 aa).

Positions 1 to 82 constitute a DIX domain; it reads MAETKVIYHL…RVVSWLVSSE (82 aa). Disordered stretches follow at residues 81-181 and 195-237; these read SETS…SSST and EEDD…SSFS. The span at 98–111 shows a compositional bias: pro residues; that stretch reads DPPPVPPPVPPPPA. Residues 146-157 show a composition bias toward basic and acidic residues; the sequence is MRRDRVRRRDST. Positions 202 to 213 are enriched in polar residues; sequence RFSSSTEQSSAS. Positions 215-227 are enriched in basic residues; the sequence is LLKRHRRRRKQRP. In terms of domain architecture, PDZ spans 250–335; the sequence is TVTLNMEKYN…KPGPIILTVA (86 aa). The DEP domain occupies 424-498; sequence PESGLEVRDR…SEQCYYIFGD (75 aa). 3 stretches are compositionally biased toward low complexity: residues 570 to 589, 612 to 629, and 637 to 647; these read MGSA…SNRS, KSGS…SIRR, and PPSERSTSSRP. Positions 570 to 660 are disordered; the sequence is MGSAGSQHSE…HPPSVHSYAA (91 aa).

It belongs to the DSH family. Can form homomultimers. Interacts with prickle1. Interacts (via the PDZ domain) with ccdc88c/dal and dact1-B/dpr. Interacts (via the DIX domain) with ARP/Axin-related protein and dact1-A/frodo. Interacts with sdc4, possibly via fz7. Interacts directly (via the DEP domain) with efnb1/ephrin-B1. May interact indirectly with the phosphorylated ephrin receptors ephb1 and ephb2 via SH domain-containing adapters. Post-translationally, phosphorylated. Phosphorylation is controlled by frizzled proteins, correlates with the onset of embryo dorsalizing events and is higher in the dorsal half of early cleavage embryos. Phosphorylated on tyrosine residues in response to association with efnb1/ephrin-B1.

It localises to the cytoplasm. It is found in the cytoplasmic vesicle. The protein resides in the cell projection. The protein localises to the cilium. Its subcellular location is the nucleus. It localises to the cell membrane. Its function is as follows. Involved in at least 2 independent signaling cascades, controlling cell fate via canonical Wnt signaling and cell polarity via a planar cell polarity (PCP) cascade. Acts synergistically with dal/dapple-like to activate Wnt signaling, stabilizing ctnnb1/beta-catenin and leading to dorsal axis formation. Also prevents degradation of ctnnb1/beta-catenin by displacing gsk3 from a complex with ARP/Axin-related protein. Has an additional role in anterior-posterior (A/P) axis formation, specifying different neuroectodermal cell fates along the A/P axis in a dose-dependent manner by activating several early patterning genes. In the PCP pathway, required at the cell membrane for PCP-mediated neural and mesodermal convergent extension during gastrulation and subsequent neural tube closure, acting to activate jnk. Also involved in blastopore closure and archenteron elongation during early, but not late, gastrulation. Associates with ephrin receptors and ligands and acts as part of a downstream PCP pathway to mediate ephrin-mediated cell repulsion via activation of rhoa. Required for efnb1/ephrin-B1-driven movement of non-retinal progenitor cells into the retina during eye field formation. Patterns the hindbrain. Required for ciliogenesis. Controls the docking of basal bodies to the apical plasma membrane; mediates the activation, but not localization of rhoa at the apical surface of ciliated cells during basal body docking. Furthermore, required for the association of basal bodies with membrane-bound vesicles and the vesicle-trafficking protein exoc4/sec8, and this association is in turn required for basal body docking. Once basal bodies are docked, required for the planar polarization of basal bodies that underlies ciliary beating and the directional fluid flow across ciliated epithelia. In Xenopus tropicalis (Western clawed frog), this protein is Segment polarity protein dishevelled homolog DVL-2.